A 1481-amino-acid chain; its full sequence is Structural protein ORF147 (1481 aa).

Disordered stretches follow at residues alanine 65–glutamate 88 and aspartate 1319–proline 1403. 3 stretches are compositionally biased toward low complexity: residues lysine 73–serine 84, serine 1323–threonine 1336, and serine 1393–proline 1403.

The protein localises to the virion. This is Structural protein ORF147 from Noctuidae (owlet moths).